The primary structure comprises 108 residues: Heme oxygenase (staphylobilin-producing) 2 (108 aa).

Residues 2–93 (FMAENRLQLQ…DDDGQQSPIL (92 aa)) form the ABM domain. A Fe cation-binding site is contributed by asparagine 6. Residues 21–28 (RFYNRQGI) and histidine 76 contribute to the heme site.

The protein belongs to the antibiotic biosynthesis monooxygenase family. Heme-degrading monooxygenase IsdG subfamily. Homodimer.

It is found in the cytoplasm. The enzyme catalyses heme b + 5 AH2 + 4 O2 + 2 H(+) = delta-staphylobilin + Fe(2+) + formaldehyde + 5 A + 4 H2O. It catalyses the reaction heme b + 5 AH2 + 4 O2 + 2 H(+) = beta-staphylobilin + Fe(2+) + formaldehyde + 5 A + 4 H2O. Functionally, allows bacterial pathogens to use the host heme as an iron source. Catalyzes the oxidative degradation of the heme macrocyclic porphyrin ring to the oxo-bilirubin chromophore staphylobilin (a mixture of the linear tetrapyrroles 5-oxo-delta-bilirubin and 15-oxo-beta-bilirubin) in the presence of a suitable electron donor such as ascorbate or NADPH--cytochrome P450 reductase, with subsequent release of free iron. This is Heme oxygenase (staphylobilin-producing) 2 (isdI) from Staphylococcus aureus (strain MRSA252).